The sequence spans 273 residues: Ribosomal RNA small subunit methyltransferase A (273 aa).

Asn18, Leu20, Gly45, Glu66, Asp91, and Asn113 together coordinate S-adenosyl-L-methionine.

It belongs to the class I-like SAM-binding methyltransferase superfamily. rRNA adenine N(6)-methyltransferase family. RsmA subfamily.

The protein resides in the cytoplasm. It carries out the reaction adenosine(1518)/adenosine(1519) in 16S rRNA + 4 S-adenosyl-L-methionine = N(6)-dimethyladenosine(1518)/N(6)-dimethyladenosine(1519) in 16S rRNA + 4 S-adenosyl-L-homocysteine + 4 H(+). Functionally, specifically dimethylates two adjacent adenosines (A1518 and A1519) in the loop of a conserved hairpin near the 3'-end of 16S rRNA in the 30S particle. May play a critical role in biogenesis of 30S subunits. This chain is Ribosomal RNA small subunit methyltransferase A, found in Salmonella schwarzengrund (strain CVM19633).